Reading from the N-terminus, the 240-residue chain is Sugar fermentation stimulation protein homolog (240 aa).

It belongs to the SfsA family.

This Saccharolobus islandicus (strain M.16.4 / Kamchatka #3) (Sulfolobus islandicus) protein is Sugar fermentation stimulation protein homolog.